Here is a 521-residue protein sequence, read N- to C-terminus: Probable methylmalonate-semialdehyde/malonate-semialdehyde dehydrogenase [acylating], mitochondrial (521 aa).

The NAD(+) site is built by Phe172, Lys196, Glu199, Arg200, and Ser249. The active-site Nucleophile is the Cys304. Glu404 is a binding site for NAD(+).

Belongs to the aldehyde dehydrogenase family. In terms of assembly, homotetramer.

It localises to the mitochondrion. It catalyses the reaction 2-methyl-3-oxopropanoate + NAD(+) + CoA + H2O = propanoyl-CoA + hydrogencarbonate + NADH + H(+). The catalysed reaction is 3-oxopropanoate + NAD(+) + CoA + H2O = hydrogencarbonate + acetyl-CoA + NADH + H(+). In terms of biological role, probable malonate and methylmalonate semialdehyde dehydrogenase involved in the catabolism of valine, thymine, and compounds catabolized by way of beta-alanine, including uracil and cytidine. The polypeptide is Probable methylmalonate-semialdehyde/malonate-semialdehyde dehydrogenase [acylating], mitochondrial (Aedes aegypti (Yellowfever mosquito)).